The following is a 154-amino-acid chain: Large ribosomal subunit protein uL13 (154 aa).

This sequence belongs to the universal ribosomal protein uL13 family. In terms of assembly, part of the 50S ribosomal subunit.

In terms of biological role, this protein is one of the early assembly proteins of the 50S ribosomal subunit, although it is not seen to bind rRNA by itself. It is important during the early stages of 50S assembly. The sequence is that of Large ribosomal subunit protein uL13 from Rhizobium etli (strain ATCC 51251 / DSM 11541 / JCM 21823 / NBRC 15573 / CFN 42).